A 282-amino-acid polypeptide reads, in one-letter code: Globin-related protein glb-13 (282 aa).

Residues 1–46 are disordered; the sequence is MGQENSKCPHQSLAEKRYKVERPKTKKVSSGSATERCLSTQSDEKN. A compositionally biased stretch (basic and acidic residues) spans 13–23; sequence LAEKRYKVERP. Polar residues predominate over residues 28–41; that stretch reads VSSGSATERCLSTQ. Residues 100 to 249 form the Globin domain; the sequence is FLTRRERILL…IISFMRRGFD (150 aa). Residues His-162 and His-194 each contribute to the heme b site.

Belongs to the globin family.

In terms of biological role, involved in oxidative stress resistance. The polypeptide is Globin-related protein glb-13 (Caenorhabditis elegans).